A 1050-amino-acid polypeptide reads, in one-letter code: TSC22 domain family protein 1 (1050 aa).

The segment at 1-99 (MHQPPESTAA…SQAQLQGQPL (99 aa)) is required for interaction with TGFBR1 and promotion of TGF-beta signaling. Disordered stretches follow at residues 22 to 111 (MAHP…KKSG), 126 to 285 (ISSN…VSSA), 445 to 479 (QTPT…SVGS), 511 to 531 (DFSS…VQLQ), 581 to 609 (LAQP…QLQY), 720 to 740 (VQPP…PPSS), 795 to 847 (QLPT…GSLV), and 879 to 919 (SLAQ…VSDG). Over residues 38–55 (ASALSAAGTGVSGAAPSS) the composition is skewed to low complexity. A compositionally biased stretch (pro residues) spans 58-71 (FPPPSSLLQPPPPA). Over residues 85–97 (SLNLLSQAQLQGQ) the composition is skewed to low complexity. A compositionally biased stretch (acidic residues) spans 134–143 (EDTESYDDLD). The span at 217–241 (HPHHLHHHHHIHHGHHLHHGHHHSS) shows a compositional bias: basic residues. S265 is subject to Phosphoserine. The span at 458-476 (TSGSSVSSSVSTLSHYTES) shows a compositional bias: low complexity. A compositionally biased stretch (pro residues) spans 586–603 (LPYPQPAPPVQTPLPGAP). Low complexity predominate over residues 906–919 (LSGDSGGVSAVSDG). The segment at 983–1004 (LKEQIKELIEKNSQLEQENNLL) is leucine-zipper. Residues 1015–1050 (QFQAQLQTGSPPATTQPQGTTQPPAQPASQGSGSTA) are disordered. The span at 1021-1050 (QTGSPPATTQPQGTTQPPAQPASQGSGSTA) shows a compositional bias: low complexity.

This sequence belongs to the TSC-22/Dip/Bun family. In terms of assembly, forms homodimers. Forms heterodimers. Component of a complex composed of TSC22D1 (via N-terminus), TGFBR1 and TGFBR2; the interaction between TSC22D1 and TGFBR1 is inhibited by SMAD7 and promoted by TGFB1. Interacts with SMAD7; the interaction requires TGF-beta and the interaction is inhibited by TGFBR1. Interacts with TPT1/fortilin; interaction results in the destabilization of TSC22D1 protein and prevents TSC22D1-mediated apoptosis. Interacts with SMAD4 (via N-terminus). Interacts with ACVRL1/ALK1, ACVR1/ALK2, BMPR1A/ALK3, ACVR1B/ALK4, BMPR1B/ALK6, ACVR2A/ACTRII, and BMPR2. Interacts with SMAD6. Interacts with TFE3; the interaction is enhanced in the presence of TGF-beta. As to quaternary structure, forms a heterodimer with TSC22D4/THG1. Forms a heterodimer with TSC22D4/THG1. Interacts with histone H1-2. Interacts with GNL3. In terms of tissue distribution, ubiquitously expressed, abundantly expressed in testis, ovary, uterus, and lung. Expressed in cardiomyocytes.

It is found in the cytoplasm. It localises to the nucleus. Its subcellular location is the cell membrane. The protein localises to the mitochondrion. Transcriptional repressor. Acts on the C-type natriuretic peptide (CNP) promoter. Acts to promote CASP3-mediated apoptosis. Positively regulates TGF-beta signaling by interacting with SMAD7 which inhibits binding of SMAD7 to TGFBR1, preventing recruitment of SMURF ubiquitin ligases to TGFBR1 and inhibiting SMURF-mediated ubiquitination and degradation of TGFBR1. Contributes to enhancement of TGF-beta signaling by binding to and modulating the transcription activator activity of SMAD4. Promotes TGF-beta-induced transcription of COL1A2; via its interaction with TFE3 at E-boxes in the gene proximal promoter. Plays a role in the repression of hematopoietic precursor cell growth. Promotes IL2 deprivation-induced apoptosis in T-lymphocytes, via repression of TSC22D3/GILZ transcription and activation of the caspase cascade. In terms of biological role, may act to negatively regulate TGFB3 signaling and thereby inhibit cell death in mammary gland cells. Functionally, positively regulates cell death in response to TGFB3 during mammary gland involution. This Rattus norvegicus (Rat) protein is TSC22 domain family protein 1.